The chain runs to 115 residues: uncharacterized protein (115 aa).

In terms of domain architecture, MSP spans 1–115 (MGVEISLDPP…ETVIKLSAAE (115 aa)).

This is an uncharacterized protein from Caenorhabditis elegans.